A 77-amino-acid polypeptide reads, in one-letter code: Probable Fe(2+)-trafficking protein (77 aa).

This sequence belongs to the Fe(2+)-trafficking protein family. In terms of assembly, monomer.

In terms of biological role, could be a mediator in iron transactions between iron acquisition and iron-requiring processes, such as synthesis and/or repair of Fe-S clusters in biosynthetic enzymes. This chain is Probable Fe(2+)-trafficking protein, found in Buchnera aphidicola subsp. Acyrthosiphon pisum (strain APS) (Acyrthosiphon pisum symbiotic bacterium).